A 366-amino-acid polypeptide reads, in one-letter code: Putative neutrophil cytosol factor 1C (366 aa).

One can recognise a PX domain in the interval 1 to 101 (MYMFLVKWQD…DFFKVRPDDL (101 aa)). 2 consecutive SH3 domains span residues 132-191 (IILQ…PLDS) and 202-261 (YAGE…KSGQ). Residues 261–366 (QDVSQAQRQI…STKRKLASAV (106 aa)) form a disordered region. 2 positions are modified to phosphoserine: Ser-279 and Ser-280. Basic residues predominate over residues 285–294 (HSIHQRSRKR). Residues Ser-296, Ser-304, Ser-321, and Ser-324 each carry the phosphoserine modification.

Its subcellular location is the cytoplasm. Functionally, may be required for activation of the latent NADPH oxidase (necessary for superoxide production). This Homo sapiens (Human) protein is Putative neutrophil cytosol factor 1C (NCF1C).